The sequence spans 250 residues: DNA repair protein RecO (250 aa).

It belongs to the RecO family.

Its function is as follows. Involved in DNA repair and RecF pathway recombination. The polypeptide is DNA repair protein RecO (Rhodopseudomonas palustris (strain TIE-1)).